The sequence spans 168 residues: Bcl2-associated agonist of cell death (168 aa).

Residue Met1 is modified to N-acetylmethionine. A disordered region spans residues 1–105 (MFQIPEFEPS…RSRSAPPNLW (105 aa)). Ser25 bears the Phosphoserine mark. Polar residues predominate over residues 49–60 (SHQQEQPTSSSH). Phosphoserine occurs at positions 75 and 91. Residues Arg94 and Arg96 each carry the asymmetric dimethylarginine; by PRMT1 modification. The residue at position 97 (Ser97) is a Phosphoserine. Phosphoserine; by PKA, PKB, PAK1, RPS6KA1, RPS6KB1 and PKC/PRKCQ is present on Ser99. Position 99 is a phosphoserine; by PKB/AKT1 (Ser99). Residues 110–124 (YGRELRRMSDEFVDS) carry the BH3 motif. Phosphoserine is present on residues Ser118 and Ser134. The segment at 125–145 (FKKGLPRPKSAGTATQMRQSS) is disordered. Residues 136–145 (GTATQMRQSS) are compositionally biased toward polar residues. Position 161 is an omega-N-methylarginine (Arg161).

It belongs to the Bcl-2 family. Forms heterodimers with the anti-apoptotic proteins, Bcl-X(L), Bcl-2 and Bcl-W. Also binds protein S100A10. The Ser-75/Ser-99 phosphorylated form binds 14-3-3 proteins. Interacts with AKT1 and PIM3. Interacts (via BH3 domain) with NOL3 (via CARD domain); preventing the association of BAD with BCL2. Interacts with HIF3A (via C-terminus domain); the interaction reduces the binding between BAD and BAX. Interacts with GIMAP3/IAN4 and GIMAP5/IAN5. Phosphorylated on one or more of Ser-75, Ser-99, Ser-118 and Ser-134 in response to survival stimuli, which blocks its pro-apoptotic activity. Phosphorylation on Ser-99 or Ser-75 promotes heterodimerization with 14-3-3 proteins. This interaction then facilitates the phosphorylation at Ser-118, a site within the BH3 motif, leading to the release of Bcl-X(L) and the promotion of cell survival. Ser-99 is the major site of AKT/PKB phosphorylation, Ser-118 the major site of protein kinase A (CAPK) phosphorylation. Phosphorylation at Ser-99 by PKB/AKT1 is almost completely blocked by the apoptotic C-terminus cleavage product of PKN2 generated by caspases-3 activity during apoptosis. Post-translationally, methylation at Arg-94 and Arg-96 by PRMT1 inhibits Akt-mediated phosphorylation at Ser-99. In terms of tissue distribution, expressed in a wide variety of tissues.

It is found in the mitochondrion outer membrane. Its subcellular location is the cytoplasm. Promotes cell death. Successfully competes for the binding to Bcl-X(L), Bcl-2 and Bcl-W, thereby affecting the level of heterodimerization of these proteins with BAX. Can reverse the death repressor activity of Bcl-X(L), but not that of Bcl-2. Appears to act as a link between growth factor receptor signaling and the apoptotic pathways. The polypeptide is Bcl2-associated agonist of cell death (BAD) (Homo sapiens (Human)).